Consider the following 1389-residue polypeptide: uncharacterized protein (1389 aa).

Positions 43–94 (STIAQRVSQLENEVAEINVALAEHVNELNSQEKRIDKLEKTVKKKKSNCSDD) form a coiled coil. The segment at 294-353 (HKNRRSKSDNSDLSEYSSSNSDDSECTDSDGSSCSTDGSPDCTESENTESHRSHGKKKHR) is disordered. Low complexity-rich tracts occupy residues 304-314 (SDLSEYSSSNS) and 322-335 (SDGS…SPDC). 3 WD repeats span residues 867-907 (TFTD…VKHI), 1017-1056 (GYNE…TPSG), and 1115-1156 (GISN…ILST).

It localises to the virion. This is an uncharacterized protein from Acanthamoeba polyphaga (Amoeba).